The following is a 328-amino-acid chain: Tetraacyldisaccharide 4'-kinase (328 aa).

Position 59–66 (59–66 (TAGGNGKT)) interacts with ATP.

Belongs to the LpxK family.

It carries out the reaction a lipid A disaccharide + ATP = a lipid IVA + ADP + H(+). It functions in the pathway glycolipid biosynthesis; lipid IV(A) biosynthesis; lipid IV(A) from (3R)-3-hydroxytetradecanoyl-[acyl-carrier-protein] and UDP-N-acetyl-alpha-D-glucosamine: step 6/6. Functionally, transfers the gamma-phosphate of ATP to the 4'-position of a tetraacyldisaccharide 1-phosphate intermediate (termed DS-1-P) to form tetraacyldisaccharide 1,4'-bis-phosphate (lipid IVA). This is Tetraacyldisaccharide 4'-kinase from Aliivibrio fischeri (strain MJ11) (Vibrio fischeri).